A 699-amino-acid chain; its full sequence is NAD(P)H-quinone oxidoreductase subunit 5, chloroplastic (699 aa).

A run of 15 helical transmembrane segments spans residues 1 to 21, 32 to 52, 81 to 101, 117 to 137, 139 to 159, 177 to 197, 216 to 236, 250 to 270, 272 to 292, 319 to 339, 346 to 366, 388 to 408, 417 to 437, 539 to 559, and 598 to 618; these read WIIP…LLLF, WAFP…NLSI, IDPL…TVLI, FAYM…SNLI, IYIF…FWFT, GDFG…SFEF, LFVT…SAQF, TPIS…FLVA, LLPL…IGII, LGYM…FHLI, ALLF…VGYS, ISFL…CFWS, WLYS…TAFY, LFPL…GISF, and IFSV…YKPI.

It belongs to the complex I subunit 5 family. As to quaternary structure, NDH is composed of at least 16 different subunits, 5 of which are encoded in the nucleus.

It localises to the plastid. The protein resides in the chloroplast thylakoid membrane. The catalysed reaction is a plastoquinone + NADH + (n+1) H(+)(in) = a plastoquinol + NAD(+) + n H(+)(out). It carries out the reaction a plastoquinone + NADPH + (n+1) H(+)(in) = a plastoquinol + NADP(+) + n H(+)(out). Functionally, NDH shuttles electrons from NAD(P)H:plastoquinone, via FMN and iron-sulfur (Fe-S) centers, to quinones in the photosynthetic chain and possibly in a chloroplast respiratory chain. The immediate electron acceptor for the enzyme in this species is believed to be plastoquinone. Couples the redox reaction to proton translocation, and thus conserves the redox energy in a proton gradient. The chain is NAD(P)H-quinone oxidoreductase subunit 5, chloroplastic (ndhF) from Digitalis grandiflora (Yellow foxglove).